A 254-amino-acid polypeptide reads, in one-letter code: Probable phosphatase Shew185_1467 (254 aa).

Residues H8, H10, H16, H41, E74, H102, H132, D193, and H195 each coordinate Zn(2+).

Belongs to the PHP family. It depends on Zn(2+) as a cofactor.

The chain is Probable phosphatase Shew185_1467 from Shewanella baltica (strain OS185).